Here is a 63-residue protein sequence, read N- to C-terminus: Large ribosomal subunit protein bL32 (63 aa).

The disordered stretch occupies residues 1 to 45 (MAVQQNKKSRSRRDMRRSHDALTKPTLSVDPTTGETHLRHHMTPD). Basic residues predominate over residues 7 to 16 (KKSRSRRDMR). Residues 25–35 (PTLSVDPTTGE) show a composition bias toward polar residues.

Belongs to the bacterial ribosomal protein bL32 family.

This is Large ribosomal subunit protein bL32 from Legionella pneumophila (strain Paris).